We begin with the raw amino-acid sequence, 119 residues long: Ig heavy chain V region X44 (119 aa).

The Ig-like domain occupies 1–117 (EVKLLESGGG…WGQGTLVTVS (117 aa)).

This is Ig heavy chain V region X44 from Mus musculus (Mouse).